The primary structure comprises 296 residues: tRNA dimethylallyltransferase (296 aa).

11 to 18 is a binding site for ATP; it reads GPTAVGKT. 13-18 contributes to the substrate binding site; sequence TAVGKT. The segment at 36–39 is interaction with substrate tRNA; sequence DSQQ.

The protein belongs to the IPP transferase family. As to quaternary structure, monomer. Mg(2+) is required as a cofactor.

It carries out the reaction adenosine(37) in tRNA + dimethylallyl diphosphate = N(6)-dimethylallyladenosine(37) in tRNA + diphosphate. Its function is as follows. Catalyzes the transfer of a dimethylallyl group onto the adenine at position 37 in tRNAs that read codons beginning with uridine, leading to the formation of N6-(dimethylallyl)adenosine (i(6)A). The chain is tRNA dimethylallyltransferase from Streptococcus agalactiae serotype Ia (strain ATCC 27591 / A909 / CDC SS700).